Consider the following 377-residue polypeptide: SH2/SH3 adapter protein NCK1 (377 aa).

Ala-2 is modified (N-acetylalanine). The 60-residue stretch at 2-61 (AEEVVVVAKFDYVAQQEQELDIKKNERLWLLDDSKSWWRVRNSMNKTGFVPSNYVERKNS) folds into the SH3 1 domain. Ser-85, Ser-89, Ser-91, and Ser-96 each carry phosphoserine. A Phosphotyrosine modification is found at Tyr-105. An SH3 2 domain is found at 106-165 (DLNMPAYVKFNYMAEREDELSLIKGTKVIVMEKCSDGWWRGSYNGQVGWFPSNYVTEEGD). The residue at position 166 (Ser-166) is a Phosphoserine. The SH3 3 domain occupies 190–252 (QVLHVVQALY…PKNYVTVMQN (63 aa)). The 95-residue stretch at 282–376 (WYYGKVTRHQ…GEKLYLVKHL (95 aa)) folds into the SH2 domain.

Interacts (via SH2 domain and SH3 domain 2) with EGFR. Interacts with PAK1 and SOS1. Interacts (via SH3 domains) with PKN2. Associates with BLNK, PLCG1, VAV1 and NCK1 in a B-cell antigen receptor-dependent fashion. Interacts with SOCS7. This interaction is required for nuclear import. Part of a complex containing PPP1R15B, PP1 and NCK1. Interacts with RALGPS1. Interacts with CAV2 (tyrosine phosphorylated form). Interacts with ADAM15. Interacts with FASLG. Directly interacts with RASA1. Interacts with isoform 4 of MINK1. Interacts with FLT1 (tyrosine phosphorylated). Interacts with KDR (tyrosine phosphorylated). Interacts (via SH2 domain) with EPHB1; activates the JUN cascade to regulate cell adhesion. Interacts with EPHA2. Interacts (via SH2 domain) with PDGFRB (tyrosine phosphorylated). Interacts with the inactive form of EIF2AK2/PKR. Interacts with PTPN1. Interacts with INSR/insulin receptor (in response to insulin stimulation); This interaction may mediate PTPN1 recruitment leading to INSR dephosphorylation. Interacts with IRS1. Post-translationally, phosphorylated on Ser and Tyr residues. Phosphorylated in response to activation of EGFR and FcERI. Phosphorylated by activated PDGFRB.

Its subcellular location is the cytoplasm. The protein localises to the endoplasmic reticulum. It localises to the nucleus. Its function is as follows. Adapter protein which associates with tyrosine-phosphorylated growth factor receptors, such as KDR and PDGFRB, or their cellular substrates. Maintains low levels of EIF2S1 phosphorylation by promoting its dephosphorylation by PP1. Plays a role in the DNA damage response, not in the detection of the damage by ATM/ATR, but for efficient activation of downstream effectors, such as that of CHEK2. Plays a role in ELK1-dependent transcriptional activation in response to activated Ras signaling. Modulates the activation of EIF2AK2/PKR by dsRNA. May play a role in cell adhesion and migration through interaction with ephrin receptors. The protein is SH2/SH3 adapter protein NCK1 (NCK1) of Homo sapiens (Human).